The following is a 300-amino-acid chain: Nicotinate-nucleotide pyrophosphorylase [carboxylating] (300 aa).

An important for hexamer formation region spans residues 5–9 (QLLPK). Quinolinate contacts are provided by residues Arg107, 150–151 (RK), 172–173 (HR), Lys183, Glu213, Asp234, 260–262 (SGG), and Gly282.

This sequence belongs to the NadC/ModD family. Hexamer formed by 3 homodimers.

It carries out the reaction nicotinate beta-D-ribonucleotide + CO2 + diphosphate = quinolinate + 5-phospho-alpha-D-ribose 1-diphosphate + 2 H(+). It functions in the pathway cofactor biosynthesis; NAD(+) biosynthesis; nicotinate D-ribonucleotide from quinolinate: step 1/1. Its function is as follows. Involved in the catabolism of quinolinic acid (QA). This is Nicotinate-nucleotide pyrophosphorylase [carboxylating] (qprt) from Dictyostelium discoideum (Social amoeba).